Here is a 160-residue protein sequence, read N- to C-terminus: Putative NrdI-like protein (160 aa).

Belongs to the NrdI family.

The polypeptide is Putative NrdI-like protein (Streptococcus pyogenes serotype M3 (strain ATCC BAA-595 / MGAS315)).